The following is an 877-amino-acid chain: Alanine--tRNA ligase (877 aa).

His563, His567, Cys667, and His671 together coordinate Zn(2+).

It belongs to the class-II aminoacyl-tRNA synthetase family. Requires Zn(2+) as cofactor.

The protein resides in the cytoplasm. It carries out the reaction tRNA(Ala) + L-alanine + ATP = L-alanyl-tRNA(Ala) + AMP + diphosphate. Functionally, catalyzes the attachment of alanine to tRNA(Ala) in a two-step reaction: alanine is first activated by ATP to form Ala-AMP and then transferred to the acceptor end of tRNA(Ala). Also edits incorrectly charged Ser-tRNA(Ala) and Gly-tRNA(Ala) via its editing domain. This chain is Alanine--tRNA ligase, found in Cytophaga hutchinsonii (strain ATCC 33406 / DSM 1761 / CIP 103989 / NBRC 15051 / NCIMB 9469 / D465).